A 146-amino-acid polypeptide reads, in one-letter code: Universal stress protein MTH_1154 (146 aa).

Belongs to the universal stress protein A family.

The sequence is that of Universal stress protein MTH_1154 from Methanothermobacter thermautotrophicus (strain ATCC 29096 / DSM 1053 / JCM 10044 / NBRC 100330 / Delta H) (Methanobacterium thermoautotrophicum).